The sequence spans 301 residues: Probable alpha-L-glutamate ligase (301 aa).

An ATP-grasp domain is found at 104–287 (LQLLSRKGIG…VADEIIRFIE (184 aa)). ATP contacts are provided by residues Lys141, 178-179 (EF), Asp187, and 211-213 (RSN). Mg(2+)-binding residues include Asp248, Glu260, and Asn262. Mn(2+) contacts are provided by Asp248, Glu260, and Asn262.

This sequence belongs to the RimK family. The cofactor is Mg(2+). Mn(2+) serves as cofactor.

The chain is Probable alpha-L-glutamate ligase from Syntrophotalea carbinolica (strain DSM 2380 / NBRC 103641 / GraBd1) (Pelobacter carbinolicus).